The sequence spans 428 residues: Adenylosuccinate synthetase 1 (428 aa).

Residues 12 to 18 (GDEGKGK) and 40 to 42 (GHT) contribute to the GTP site. The active-site Proton acceptor is Asp-13. Mg(2+) contacts are provided by Asp-13 and Gly-40. Residues 13-16 (DEGK), 38-41 (NAGH), Thr-133, Arg-147, Asn-224, Thr-239, and Arg-303 contribute to the IMP site. The Proton donor role is filled by His-41. 299 to 305 (TTTGRRR) serves as a coordination point for substrate. GTP-binding positions include Arg-305, 331-333 (KLD), and 413-415 (GVG).

The protein belongs to the adenylosuccinate synthetase family. As to quaternary structure, homodimer. It depends on Mg(2+) as a cofactor.

The protein localises to the cytoplasm. The enzyme catalyses IMP + L-aspartate + GTP = N(6)-(1,2-dicarboxyethyl)-AMP + GDP + phosphate + 2 H(+). It participates in purine metabolism; AMP biosynthesis via de novo pathway; AMP from IMP: step 1/2. Plays an important role in the de novo pathway and in the salvage pathway of purine nucleotide biosynthesis. Catalyzes the first committed step in the biosynthesis of AMP from IMP. This Laccaria bicolor (strain S238N-H82 / ATCC MYA-4686) (Bicoloured deceiver) protein is Adenylosuccinate synthetase 1.